Here is a 154-residue protein sequence, read N- to C-terminus: Superoxide dismutase [Cu-Zn] (154 aa).

3 residues coordinate Cu cation: His-47, His-49, and His-64. A disulfide bridge connects residues Cys-58 and Cys-147. The segment at 62–89 is disordered; sequence GPHFNPFKKNHGGPTDSERHVGDLGNVK. Zn(2+) is bound by residues His-64, His-72, His-81, and Asp-84. His-121 provides a ligand contact to Cu cation. Arg-144 serves as a coordination point for substrate.

It belongs to the Cu-Zn superoxide dismutase family. In terms of assembly, homodimer. It depends on Cu cation as a cofactor. Requires Zn(2+) as cofactor.

Its subcellular location is the cytoplasm. It catalyses the reaction 2 superoxide + 2 H(+) = H2O2 + O2. Functionally, destroys radicals which are normally produced within the cells and which are toxic to biological systems. This chain is Superoxide dismutase [Cu-Zn] (SOD1), found in Yarrowia lipolytica (strain CLIB 122 / E 150) (Yeast).